Here is a 275-residue protein sequence, read N- to C-terminus: Probable aquaporin NIP7-1 (275 aa).

Residues 1 to 11 (MNGEARSRVVD) are compositionally biased toward basic and acidic residues. Positions 1–26 (MNGEARSRVVDQEAGSTPSTLRDEDH) are disordered. The next 2 helical transmembrane spans lie at 47–67 (IVMA…GVIS) and 76–96 (VGLL…VYSI). Positions 105–107 (NPS) match the NPA 1 motif. The next 3 helical transmembrane spans lie at 127-147 (ITAQ…VYGV), 161-181 (VSAF…ASAL), and 192-212 (LTGF…GPIS). The short motif at 217-219 (NPA) is the NPA 2 element. The chain crosses the membrane as a helical span at residues 231–251 (FEDLWIYMTAPVIGAIIGVLT). Serine 272 carries the phosphoserine modification.

This sequence belongs to the MIP/aquaporin (TC 1.A.8) family. NIP (TC 1.A.8.12) subfamily. As to expression, expressed in floral buds.

It is found in the membrane. In terms of biological role, aquaporins facilitate the transport of water and small neutral solutes across cell membranes. The protein is Probable aquaporin NIP7-1 (NIP7-1) of Arabidopsis thaliana (Mouse-ear cress).